The sequence spans 249 residues: AA9 family lytic polysaccharide monooxygenase A (249 aa).

An N-terminal signal peptide occupies residues 1 to 19; it reads MRGPLCFTLIAIAVTSVVA. Cu(2+) is bound by residues His-20 and His-97. An intrachain disulfide couples Cys-60 to Cys-183. Position 163 (His-163) interacts with O2. Tyr-180 contacts Cu(2+).

This sequence belongs to the polysaccharide monooxygenase AA9 family. Cu(2+) serves as cofactor.

It is found in the secreted. The catalysed reaction is [(1-&gt;4)-beta-D-glucosyl]n+m + reduced acceptor + O2 = 4-dehydro-beta-D-glucosyl-[(1-&gt;4)-beta-D-glucosyl]n-1 + [(1-&gt;4)-beta-D-glucosyl]m + acceptor + H2O.. Its function is as follows. Lytic polysaccharide monooxygenase (LPMO) that depolymerizes crystalline and amorphous polysaccharides via the oxidation of scissile alpha- or beta-(1-4)-glycosidic bonds, yielding C4 oxidation products. Catalysis by LPMOs requires the reduction of the active-site copper from Cu(II) to Cu(I) by a reducing agent and H(2)O(2) or O(2) as a cosubstrate. Active on cellulose and cello-oligosaccharides, as well as plant cell wall-derived hemicellulosic polysaccharides. Also active on cello-oligosaccharides such as cellohexaose, cellopentaose or cellotetraose. The protein is AA9 family lytic polysaccharide monooxygenase A of Armillaria gallica (Bulbous honey fungus).